Here is a 476-residue protein sequence, read N- to C-terminus: Bifunctional protein HldE (476 aa).

Positions 1 to 319 (MKISLPAFEK…EALSLSHGES (319 aa)) are ribokinase. 195-198 (NMSE) is a binding site for ATP. The active site involves Asp-264. A cytidylyltransferase region spans residues 345–476 (MTNGCFDILH…AIIQNIMANQ (132 aa)).

In the N-terminal section; belongs to the carbohydrate kinase PfkB family. The protein in the C-terminal section; belongs to the cytidylyltransferase family. As to quaternary structure, homodimer.

The enzyme catalyses D-glycero-beta-D-manno-heptose 7-phosphate + ATP = D-glycero-beta-D-manno-heptose 1,7-bisphosphate + ADP + H(+). The catalysed reaction is D-glycero-beta-D-manno-heptose 1-phosphate + ATP + H(+) = ADP-D-glycero-beta-D-manno-heptose + diphosphate. It participates in nucleotide-sugar biosynthesis; ADP-L-glycero-beta-D-manno-heptose biosynthesis; ADP-L-glycero-beta-D-manno-heptose from D-glycero-beta-D-manno-heptose 7-phosphate: step 1/4. The protein operates within nucleotide-sugar biosynthesis; ADP-L-glycero-beta-D-manno-heptose biosynthesis; ADP-L-glycero-beta-D-manno-heptose from D-glycero-beta-D-manno-heptose 7-phosphate: step 3/4. Catalyzes the phosphorylation of D-glycero-D-manno-heptose 7-phosphate at the C-1 position to selectively form D-glycero-beta-D-manno-heptose-1,7-bisphosphate. In terms of biological role, catalyzes the ADP transfer from ATP to D-glycero-beta-D-manno-heptose 1-phosphate, yielding ADP-D-glycero-beta-D-manno-heptose. The chain is Bifunctional protein HldE from Shewanella pealeana (strain ATCC 700345 / ANG-SQ1).